The following is a 160-amino-acid chain: Cytochrome b6-f complex subunit 4 (160 aa).

The next 3 membrane-spanning stretches (helical) occupy residues 36–56, 95–115, and 131–151; these read LLYLFPVCILGTFACCIGLAV, LLGVLAMAAVPAGLITVPFIE, and LVFITGFIFAVWFGIGACLPI.

Belongs to the cytochrome b family. PetD subfamily. In terms of assembly, the 4 large subunits of the cytochrome b6-f complex are cytochrome b6, subunit IV (17 kDa polypeptide, petD), cytochrome f and the Rieske protein, while the 4 small subunits are petG, petL, petM and petN. The complex functions as a dimer.

Its subcellular location is the plastid. It localises to the chloroplast thylakoid membrane. In terms of biological role, component of the cytochrome b6-f complex, which mediates electron transfer between photosystem II (PSII) and photosystem I (PSI), cyclic electron flow around PSI, and state transitions. In Thalassiosira pseudonana (Marine diatom), this protein is Cytochrome b6-f complex subunit 4.